Here is a 377-residue protein sequence, read N- to C-terminus: Putative zinc metalloprotease Atu1380 (377 aa).

Residue His-29 participates in Zn(2+) binding. Residue Glu-30 is part of the active site. His-33 is a binding site for Zn(2+). The next 3 helical transmembrane spans lie at 118–140 (VAAGPIANFILAILIFAVLFGIY), 299–321 (LGISAVIQLAAVLSVSIGLLNLM), and 351–373 (VAFRIGMMMILGLMVFATWNDIS). In terms of domain architecture, PDZ spans 129–202 (AILIFAVLFG…TPITVTVERA (74 aa)).

It belongs to the peptidase M50B family. The cofactor is Zn(2+).

The protein resides in the cell inner membrane. In Agrobacterium fabrum (strain C58 / ATCC 33970) (Agrobacterium tumefaciens (strain C58)), this protein is Putative zinc metalloprotease Atu1380.